The primary structure comprises 369 residues: Isopentenyl-diphosphate delta-isomerase (369 aa).

Substrate is bound at residue 9–10; sequence RK. Residues Thr-65, 66 to 68, Ser-96, and Asn-125 contribute to the FMN site; that span reads GMT. A substrate-binding site is contributed by 96-98; it reads SQR. Gln-160 is a substrate binding site. Glu-161 serves as a coordination point for Mg(2+). FMN contacts are provided by residues Lys-193, Ser-218, Thr-223, 275 to 277, and 296 to 297; these read GVR and AL.

This sequence belongs to the IPP isomerase type 2 family. In terms of assembly, homooctamer. Dimer of tetramers. It depends on FMN as a cofactor. NADPH serves as cofactor. Mg(2+) is required as a cofactor.

The protein localises to the cytoplasm. It catalyses the reaction isopentenyl diphosphate = dimethylallyl diphosphate. In terms of biological role, involved in the biosynthesis of isoprenoids. Catalyzes the 1,3-allylic rearrangement of the homoallylic substrate isopentenyl (IPP) to its allylic isomer, dimethylallyl diphosphate (DMAPP). The polypeptide is Isopentenyl-diphosphate delta-isomerase (Sulfurisphaera tokodaii (strain DSM 16993 / JCM 10545 / NBRC 100140 / 7) (Sulfolobus tokodaii)).